We begin with the raw amino-acid sequence, 443 residues long: Tol-Pal system protein TolB (443 aa).

The first 33 residues, methionine 1–alanine 33, serve as a signal peptide directing secretion.

Belongs to the TolB family. In terms of assembly, the Tol-Pal system is composed of five core proteins: the inner membrane proteins TolA, TolQ and TolR, the periplasmic protein TolB and the outer membrane protein Pal. They form a network linking the inner and outer membranes and the peptidoglycan layer.

The protein localises to the periplasm. Its function is as follows. Part of the Tol-Pal system, which plays a role in outer membrane invagination during cell division and is important for maintaining outer membrane integrity. The chain is Tol-Pal system protein TolB from Brucella melitensis biotype 1 (strain ATCC 23456 / CCUG 17765 / NCTC 10094 / 16M).